The sequence spans 568 residues: C6 finger domain transcription factor BOA13 (568 aa).

Positions 14–41 (CNECHASKVRCSGERTGCRRCVYNQQKC) form a DNA-binding region, zn(2)-C6 fungal-type. 3 disordered regions span residues 92-114 (EANGNDLNSKPNDVPVESSEGIT), 207-278 (ATSS…HHNH), and 467-490 (RSRSLSTPSPRNTPSTSNSPFSNP). Residues 242–259 (HSDLSEKQAQHAQNDLRW) are compositionally biased toward basic and acidic residues. Polar residues predominate over residues 260-274 (RSQSQSYKRPTISTQ). Residues 470-490 (SLSTPSPRNTPSTSNSPFSNP) are compositionally biased toward low complexity.

Its subcellular location is the nucleus. In terms of biological role, transcription factor that probably regulates the gene clusters that mediates the biosynthesis of botcinin acid and its botcinin derivatives, acetate-derived polyketides that contribute to virulence when combined with the sesquiterpene botrydial. Botcinin acid and its derivatives have been shown to induce chlorosis and necrosis during host plant infection, but also have antifungal activities. The chain is C6 finger domain transcription factor BOA13 from Botryotinia fuckeliana (strain B05.10) (Noble rot fungus).